Here is a 375-residue protein sequence, read N- to C-terminus: Methylthioribose-1-phosphate isomerase (375 aa).

Asp257 (proton donor) is an active-site residue.

This sequence belongs to the eIF-2B alpha/beta/delta subunits family. MtnA subfamily.

The protein localises to the cytoplasm. Its subcellular location is the nucleus. It carries out the reaction 5-(methylsulfanyl)-alpha-D-ribose 1-phosphate = 5-(methylsulfanyl)-D-ribulose 1-phosphate. It functions in the pathway amino-acid biosynthesis; L-methionine biosynthesis via salvage pathway; L-methionine from S-methyl-5-thio-alpha-D-ribose 1-phosphate: step 1/6. Catalyzes the interconversion of methylthioribose-1-phosphate (MTR-1-P) into methylthioribulose-1-phosphate (MTRu-1-P). This is Methylthioribose-1-phosphate isomerase from Leishmania infantum.